The chain runs to 1450 residues: M-protein, striated muscle (1450 aa).

The segment at 66-87 (AHEAMQESRKRTHEQKSHASDE) is disordered. 2 Ig-like C2-type domains span residues 142 to 233 (PEIL…CAVV) and 254 to 359 (PLSY…AFLF). 5 Fibronectin type-III domains span residues 373 to 468 (APMD…ALDP), 501 to 596 (PPTN…PQDI), 602 to 695 (APGR…VQAA), 698 to 800 (CPSY…TMPE), and 803 to 900 (PAYD…ASPG). Ig-like C2-type domains lie at 899–995 (PGTK…LMTL), 1002–1115 (PTIP…FLRK), 1118–1204 (PHFS…LELS), 1225–1322 (PLKI…QRLK), and 1333–1422 (KVIG…VTVS).

Expressed in pectoralis and cardiac muscle.

Functionally, is a structural constituent of myofibrillar M-band in striated muscle. This is M-protein, striated muscle from Gallus gallus (Chicken).